Reading from the N-terminus, the 476-residue chain is mRNA cap guanine-N(7) methyltransferase (476 aa).

Residues 1-14 show a composition bias toward basic and acidic residues; that stretch reads MANSAKAEEYEKMS. A disordered region spans residues 1–146; it reads MANSAKAEEY…KQKNLEEGHS (146 aa). Polar residues predominate over residues 20–50; that stretch reads ASVNSETESSFNINENTTASGTGLSEKTSVC. A phosphoserine mark is found at Ser-24, Ser-28, and Ser-29. Basic and acidic residues-rich tracts occupy residues 54–68 and 84–118; these read DIAR…DLVK and LDPE…DKSS. The residue at position 118 (Ser-118) is a Phosphoserine. The Nuclear localization signal motif lies at 126–128; that stretch reads KRK. Basic and acidic residues predominate over residues 129–145; sequence IALEDVPEKQKNLEEGH. Positions 167–475 constitute an mRNA cap 0 methyltransferase domain; it reads SRIFYLRNFN…IYLVFAFEKQ (309 aa). 176–177 provides a ligand contact to mRNA; the sequence is NN. S-adenosyl-L-methionine-binding residues include Lys-180, Gly-205, Asp-227, Asp-261, Gln-284, and Tyr-289.

Belongs to the class I-like SAM-binding methyltransferase superfamily. mRNA cap 0 methyltransferase family. In terms of assembly, interacts with importin alpha, leading to stimulate both RNA-binding and methyltransferase activity. Interaction with importin alpha and beta is required for its nuclear localization, importin beta dissociating in response to RanGTP, allowing RNMT-importin alpha to bind RNA substrates. Interacts with elongating form of polymerase II and RNGTT. Interacts with RAMAC, this interaction significantly enhances RNA-binding and cap methyltransferase activity. Widely expressed.

It localises to the nucleus. The enzyme catalyses a 5'-end (5'-triphosphoguanosine)-ribonucleoside in mRNA + S-adenosyl-L-methionine = a 5'-end (N(7)-methyl 5'-triphosphoguanosine)-ribonucleoside in mRNA + S-adenosyl-L-homocysteine. Its activity is regulated as follows. Methyltransferase activity is activated by RAMAC. In terms of biological role, catalytic subunit of the mRNA-capping methyltransferase RNMT:RAMAC complex that methylates the N7 position of the added guanosine to the 5'-cap structure of mRNAs. Binds RNA containing 5'-terminal GpppC. The protein is mRNA cap guanine-N(7) methyltransferase (RNMT) of Homo sapiens (Human).